An 88-amino-acid chain; its full sequence is Cell division topological specificity factor (88 aa).

Belongs to the MinE family.

Its function is as follows. Prevents the cell division inhibition by proteins MinC and MinD at internal division sites while permitting inhibition at polar sites. This ensures cell division at the proper site by restricting the formation of a division septum at the midpoint of the long axis of the cell. The polypeptide is Cell division topological specificity factor (Aeromonas salmonicida (strain A449)).